The sequence spans 238 residues: Uridylate kinase (238 aa).

12–15 lines the ATP pocket; that stretch reads KLSG. Glycine 54 is a UMP binding site. ATP-binding residues include glycine 55 and arginine 59. UMP is bound by residues aspartate 74 and 135 to 142; that span reads TGNPYFTT. ATP contacts are provided by threonine 162, asparagine 163, tyrosine 168, and aspartate 171.

This sequence belongs to the UMP kinase family. In terms of assembly, homohexamer.

It localises to the cytoplasm. The catalysed reaction is UMP + ATP = UDP + ADP. The protein operates within pyrimidine metabolism; CTP biosynthesis via de novo pathway; UDP from UMP (UMPK route): step 1/1. Its activity is regulated as follows. Inhibited by UTP. Its function is as follows. Catalyzes the reversible phosphorylation of UMP to UDP. The sequence is that of Uridylate kinase from Rhodopseudomonas palustris (strain ATCC BAA-98 / CGA009).